The chain runs to 295 residues: 3-hydroxy-5-phosphonooxypentane-2,4-dione thiolase (295 aa).

Lys203 acts as the Schiff-base intermediate with substrate in catalysis.

The protein belongs to the DeoC/FbaB aldolase family. Homodecamer.

Its subcellular location is the cytoplasm. The enzyme catalyses dihydroxyacetone phosphate + acetyl-CoA = 3-hydroxy-2,4-dioxopentyl phosphate + CoA. Functionally, involved in the degradation of phospho-AI-2, thereby terminating induction of the lsr operon and closing the AI-2 signaling cycle. Catalyzes the transfer of an acetyl moiety from 3-hydroxy-5-phosphonooxypentane-2,4-dione to CoA to form glycerone phosphate and acetyl-CoA. The sequence is that of 3-hydroxy-5-phosphonooxypentane-2,4-dione thiolase from Klebsiella pneumoniae subsp. pneumoniae (strain ATCC 700721 / MGH 78578).